The sequence spans 232 residues: Large ribosomal subunit protein uL1 (232 aa).

Belongs to the universal ribosomal protein uL1 family. Part of the 50S ribosomal subunit.

Functionally, binds directly to 23S rRNA. The L1 stalk is quite mobile in the ribosome, and is involved in E site tRNA release. Protein L1 is also a translational repressor protein, it controls the translation of the L11 operon by binding to its mRNA. The polypeptide is Large ribosomal subunit protein uL1 (Burkholderia cenocepacia (strain ATCC BAA-245 / DSM 16553 / LMG 16656 / NCTC 13227 / J2315 / CF5610) (Burkholderia cepacia (strain J2315))).